Here is a 140-residue protein sequence, read N- to C-terminus: uncharacterized protein (140 aa).

3 consecutive transmembrane segments (helical) span residues 20–42 (ILYY…YVSG), 88–110 (FVAL…PVLL), and 115–137 (IIYT…GLLQ).

The protein localises to the cell membrane. This is an uncharacterized protein from Archaeoglobus fulgidus (strain ATCC 49558 / DSM 4304 / JCM 9628 / NBRC 100126 / VC-16).